Here is a 405-residue protein sequence, read N- to C-terminus: UDP-N-acetylglucosamine--N-acetylmuramyl-(pentapeptide) pyrophosphoryl-undecaprenol N-acetylglucosamine transferase (405 aa).

Residues 11–13 (TGG), asparagine 127, arginine 168, serine 191, isoleucine 248, and glutamine 293 contribute to the UDP-N-acetyl-alpha-D-glucosamine site.

Belongs to the glycosyltransferase 28 family. MurG subfamily.

Its subcellular location is the cell inner membrane. The catalysed reaction is di-trans,octa-cis-undecaprenyl diphospho-N-acetyl-alpha-D-muramoyl-L-alanyl-D-glutamyl-meso-2,6-diaminopimeloyl-D-alanyl-D-alanine + UDP-N-acetyl-alpha-D-glucosamine = di-trans,octa-cis-undecaprenyl diphospho-[N-acetyl-alpha-D-glucosaminyl-(1-&gt;4)]-N-acetyl-alpha-D-muramoyl-L-alanyl-D-glutamyl-meso-2,6-diaminopimeloyl-D-alanyl-D-alanine + UDP + H(+). It functions in the pathway cell wall biogenesis; peptidoglycan biosynthesis. Its function is as follows. Cell wall formation. Catalyzes the transfer of a GlcNAc subunit on undecaprenyl-pyrophosphoryl-MurNAc-pentapeptide (lipid intermediate I) to form undecaprenyl-pyrophosphoryl-MurNAc-(pentapeptide)GlcNAc (lipid intermediate II). The polypeptide is UDP-N-acetylglucosamine--N-acetylmuramyl-(pentapeptide) pyrophosphoryl-undecaprenol N-acetylglucosamine transferase (Sorangium cellulosum (strain So ce56) (Polyangium cellulosum (strain So ce56))).